A 350-amino-acid chain; its full sequence is Biotin synthase (350 aa).

The Radical SAM core domain occupies 41–268 (NEVQISRLLS…LSRVRLSAGR (228 aa)). Residues Cys-56, Cys-60, and Cys-63 each contribute to the [4Fe-4S] cluster site. Residues Cys-100, Cys-131, Cys-191, and Arg-263 each contribute to the [2Fe-2S] cluster site.

The protein belongs to the radical SAM superfamily. Biotin synthase family. Homodimer. Requires [4Fe-4S] cluster as cofactor. It depends on [2Fe-2S] cluster as a cofactor.

The catalysed reaction is (4R,5S)-dethiobiotin + (sulfur carrier)-SH + 2 reduced [2Fe-2S]-[ferredoxin] + 2 S-adenosyl-L-methionine = (sulfur carrier)-H + biotin + 2 5'-deoxyadenosine + 2 L-methionine + 2 oxidized [2Fe-2S]-[ferredoxin]. Its pathway is cofactor biosynthesis; biotin biosynthesis; biotin from 7,8-diaminononanoate: step 2/2. Its function is as follows. Catalyzes the conversion of dethiobiotin (DTB) to biotin by the insertion of a sulfur atom into dethiobiotin via a radical-based mechanism. In Shewanella putrefaciens (strain CN-32 / ATCC BAA-453), this protein is Biotin synthase.